The chain runs to 215 residues: Small ribosomal subunit protein uS7 (215 aa).

Belongs to the universal ribosomal protein uS7 family. As to quaternary structure, part of the 30S ribosomal subunit.

Its function is as follows. One of the primary rRNA binding proteins, it binds directly to 16S rRNA where it nucleates assembly of the head domain of the 30S subunit. Is located at the subunit interface close to the decoding center. This Thermococcus gammatolerans (strain DSM 15229 / JCM 11827 / EJ3) protein is Small ribosomal subunit protein uS7.